We begin with the raw amino-acid sequence, 202 residues long: Holliday junction branch migration complex subunit RuvA (202 aa).

A domain I region spans residues 1-64; it reads MIGRLRGTLA…EDAQLLYGFA (64 aa). Residues 65 to 143 are domain II; that stretch reads SKRERDFFRE…AWEAVPSMFA (79 aa). The interval 144 to 154 is flexible linker; the sequence is LVPNQPDAPAP. Positions 154–202 are domain III; it reads PVASAESDAVSALISLGYKPQEASKAVSAIKDKGLSSEDMIRRALKGMI.

The protein belongs to the RuvA family. In terms of assembly, homotetramer. Forms an RuvA(8)-RuvB(12)-Holliday junction (HJ) complex. HJ DNA is sandwiched between 2 RuvA tetramers; dsDNA enters through RuvA and exits via RuvB. An RuvB hexamer assembles on each DNA strand where it exits the tetramer. Each RuvB hexamer is contacted by two RuvA subunits (via domain III) on 2 adjacent RuvB subunits; this complex drives branch migration. In the full resolvosome a probable DNA-RuvA(4)-RuvB(12)-RuvC(2) complex forms which resolves the HJ.

The protein localises to the cytoplasm. The RuvA-RuvB-RuvC complex processes Holliday junction (HJ) DNA during genetic recombination and DNA repair, while the RuvA-RuvB complex plays an important role in the rescue of blocked DNA replication forks via replication fork reversal (RFR). RuvA specifically binds to HJ cruciform DNA, conferring on it an open structure. The RuvB hexamer acts as an ATP-dependent pump, pulling dsDNA into and through the RuvAB complex. HJ branch migration allows RuvC to scan DNA until it finds its consensus sequence, where it cleaves and resolves the cruciform DNA. The sequence is that of Holliday junction branch migration complex subunit RuvA from Pseudomonas fluorescens (strain ATCC BAA-477 / NRRL B-23932 / Pf-5).